A 110-amino-acid polypeptide reads, in one-letter code: Phosphoribosyl-ATP pyrophosphatase (110 aa).

The protein belongs to the PRA-PH family.

Its subcellular location is the cytoplasm. It catalyses the reaction 1-(5-phospho-beta-D-ribosyl)-ATP + H2O = 1-(5-phospho-beta-D-ribosyl)-5'-AMP + diphosphate + H(+). The protein operates within amino-acid biosynthesis; L-histidine biosynthesis; L-histidine from 5-phospho-alpha-D-ribose 1-diphosphate: step 2/9. This is Phosphoribosyl-ATP pyrophosphatase from Hahella chejuensis (strain KCTC 2396).